Here is a 108-residue protein sequence, read N- to C-terminus: uncharacterized protein (108 aa).

A disordered region spans residues 56–108 (ELPSRGCLPAPRPESGQGRLSTGISQNGGRSSAQPCPRCIAGESGHFSHTKNH). Residues 73–89 (GRLSTGISQNGGRSSAQ) show a composition bias toward polar residues.

This is an uncharacterized protein from Homo sapiens (Human).